The primary structure comprises 136 residues: Ig heavy chain V region XIG8 (136 aa).

A signal peptide spans 1 to 18 (GFGIFVIFMFFSPSCILS). In terms of domain architecture, Ig-like spans 19–128 (QTLQESGPGT…TAGYFEHWGQ (110 aa)).

The sequence is that of Ig heavy chain V region XIG8 from Xenopus laevis (African clawed frog).